Consider the following 336-residue polypeptide: Vomeronasal type-1 receptor 102 (336 aa).

The Extracellular segment spans residues 1–42; the sequence is MVGVQICQGMTSEILFFSLQPQFSNMMNKNSRLHIDSNIRNT. A helical transmembrane segment spans residues 43–63; it reads FFTEIGIGVSANSLLLLFNIF. Residues 64 to 75 are Cytoplasmic-facing; the sequence is KFIHGQRSRLTD. Residues 76–96 form a helical membrane-spanning segment; the sequence is LPIGLLSLINLLMLLIMACIA. The Extracellular portion of the chain corresponds to 97 to 120; it reads TDIFISCRRWDDIICKSLLYLYRT. A disulfide bond links C111 and C198. Residues 121-140 form a helical membrane-spanning segment; that stretch reads FRGLSLSTTCLLSVLQAIIL. At 141–157 the chain is on the cytoplasmic side; that stretch reads SPRSSCLAKYKHKPPHH. The helical transmembrane segment at 158–178 threads the bilayer; that stretch reads IFCAMLFLSVLYMFISSHLLL. The Extracellular portion of the chain corresponds to 179–213; that stretch reads SIIATPNLTTNDFIHVSQSCSILPMSYLMQSMFST. N185 is a glycosylation site (N-linked (GlcNAc...) asparagine). Residues 214–234 form a helical membrane-spanning segment; it reads LLAIRNVFLISLIVLSTWYMV. The Cytoplasmic portion of the chain corresponds to 235–264; that stretch reads ALLCRHRKQTRHLQDTSLSRKASPEQRATR. Residues 265–285 form a helical membrane-spanning segment; that stretch reads SILMLRSLFVLMSIFDSIVSC. Topologically, residues 286–296 are extracellular; the sequence is SRTMYLNDPTS. The helical transmembrane segment at 297 to 317 threads the bilayer; the sequence is YSIQLLVVHIYATVSPFVFMI. Residues 318–336 lie on the Cytoplasmic side of the membrane; the sequence is TEKHIVNYLKSMYVRVLNV.

The protein belongs to the G-protein coupled receptor 1 family. In terms of tissue distribution, expressed in 1-4% of neurons of the vomeronasal organ. Only one pheromone receptor gene may be expressed in a particular neuron. Not expressed in the main olfactory epithelium.

The protein localises to the cell membrane. Its function is as follows. Putative pheromone receptor implicated in the regulation of social as well as reproductive behavior. This is Vomeronasal type-1 receptor 102 (Vom1r102) from Rattus norvegicus (Rat).